Consider the following 443-residue polypeptide: Glutamyl-tRNA reductase (443 aa).

Residues 49-52, serine 109, 114-116, and glutamine 120 contribute to the substrate site; these read TCNR and EQQ. Catalysis depends on cysteine 50, which acts as the Nucleophile. 189–194 contributes to the NADP(+) binding site; sequence GAGSMG.

It belongs to the glutamyl-tRNA reductase family. In terms of assembly, homodimer.

The enzyme catalyses (S)-4-amino-5-oxopentanoate + tRNA(Glu) + NADP(+) = L-glutamyl-tRNA(Glu) + NADPH + H(+). It functions in the pathway porphyrin-containing compound metabolism; protoporphyrin-IX biosynthesis; 5-aminolevulinate from L-glutamyl-tRNA(Glu): step 1/2. In terms of biological role, catalyzes the NADPH-dependent reduction of glutamyl-tRNA(Glu) to glutamate 1-semialdehyde (GSA). The protein is Glutamyl-tRNA reductase of Mycobacteroides abscessus (strain ATCC 19977 / DSM 44196 / CCUG 20993 / CIP 104536 / JCM 13569 / NCTC 13031 / TMC 1543 / L948) (Mycobacterium abscessus).